We begin with the raw amino-acid sequence, 185 residues long: Ribosome-recycling factor (185 aa).

Belongs to the RRF family.

It localises to the cytoplasm. Responsible for the release of ribosomes from messenger RNA at the termination of protein biosynthesis. May increase the efficiency of translation by recycling ribosomes from one round of translation to another. The sequence is that of Ribosome-recycling factor from Pseudomonas putida (strain ATCC 700007 / DSM 6899 / JCM 31910 / BCRC 17059 / LMG 24140 / F1).